The following is a 300-amino-acid chain: Protein MoxJ (300 aa).

Residues 1-25 form the signal peptide; it reads MSLVNGRRRTAASVVALTAALTALA.

Its subcellular location is the periplasm. Functionally, may be involved in the assemblage of active methanol dehydrogenase and/or its cofactor PQQ in the periplasm. The chain is Protein MoxJ (moxJ) from Methylorubrum extorquens (strain ATCC 14718 / DSM 1338 / JCM 2805 / NCIMB 9133 / AM1) (Methylobacterium extorquens).